Here is a 105-residue protein sequence, read N- to C-terminus: uncharacterized protein (105 aa).

The protein belongs to the baculoviridae 11 kDa protein family.

This is an uncharacterized protein from Autographa californica nuclear polyhedrosis virus (AcMNPV).